Reading from the N-terminus, the 327-residue chain is GTPase Obg (327 aa).

Residues 1-159 enclose the Obg domain; that stretch reads MQFIDQANII…WEVQLELKLL (159 aa). The OBG-type G domain maps to 160-327; that stretch reads AEVGIIGLPN…PLLSEVWKRI (168 aa). Residues 166–173, 191–195, 213–216, 280–283, and 309–311 each bind ATP; these read GLPNAGKS, FTTLI, DIPG, NKME, and SSS. Positions 173 and 193 each coordinate Mg(2+).

It belongs to the TRAFAC class OBG-HflX-like GTPase superfamily. OBG GTPase family. Monomer. It depends on Mg(2+) as a cofactor.

The protein localises to the cytoplasm. In terms of biological role, an essential GTPase which binds GTP, GDP and possibly (p)ppGpp with moderate affinity, with high nucleotide exchange rates and a fairly low GTP hydrolysis rate. Plays a role in control of the cell cycle, stress response, ribosome biogenesis and in those bacteria that undergo differentiation, in morphogenesis control. The polypeptide is GTPase Obg (Prochlorococcus marinus subsp. pastoris (strain CCMP1986 / NIES-2087 / MED4)).